The following is a 355-amino-acid chain: Cell surface glycoprotein CD200 receptor 1 (355 aa).

The signal sequence occupies residues 1–26 (MPCTWITSDLQLRLILTLFFVAECLS). At 27 to 267 (AGMEGTKTSN…QGAEIPAHLK (241 aa)) the chain is on the extracellular side. Over residues 35-55 (SNNSMQQLDNGNHSSVSTTSS) the composition is skewed to polar residues. The disordered stretch occupies residues 35–56 (SNNSMQQLDNGNHSSVSTTSST). Asn46, Asn123, and Asn153 each carry an N-linked (GlcNAc...) asparagine glycan. 4 disulfide bridges follow: Cys85-Cys156, Cys108-Cys124, Cys191-Cys241, and Cys210-Cys229. Positions 139-257 (PALQVDPVAI…GNKSLSIQLS (119 aa)) constitute an Ig-like C2-type domain. Residues 268 to 288 (NLYITAPIFIILIVVGSIWLL) traverse the membrane as a helical segment. At 289–355 (KISGCRKCKL…NLHTIYVPRV (67 aa)) the chain is on the cytoplasmic side.

Belongs to the CD200R family. As to quaternary structure, CD200 and CD200R1 interact via their respective N-terminal Ig-like domains.

It is found in the cell membrane. Inhibitory receptor for the CD200/OX2 cell surface glycoprotein. Limits inflammation by inhibiting the expression of pro-inflammatory molecules including TNF-alpha, interferons, and inducible nitric oxide synthase (iNOS) in response to selected stimuli. This is Cell surface glycoprotein CD200 receptor 1 (CD200R1) from Bos taurus (Bovine).